We begin with the raw amino-acid sequence, 568 residues long: MHKLIELIEKGKPFFEKISRNIYLRAIRDGFIAGMPVILFSSIFILIAYVPNAWGFHWSKDIETFLMTPYSYSMGILAFFVGGTTAKALTDSKNRDLPATNQINFLSTMLASMVGFLLMAAEPAKEGGFLTAFMGTKGLLTAFIAAFVTVNVYKVCVKNNVTIRMPEDVPPNISQVFKDLIPFTVSVVLLYGLELLVKGTLGVTVAESIGTLIAPLFSAADGYLGITLIFGAYAFFWFVGIHGPSIVEPAIAAITYANIDVNLHLIQAGQHADKVITSGTQMFIATMGGTGATLIVPFLFMWICKSDRNRAIGRASVVPTFFGVNEPILFGAPIVLNPIFFVPFIFAPIVNVWIFKFFVDTLNMNSFSANLPWVTPGPLGIVLGTNFQVLSFILAGLLVVVDTIIYYPFVKVYDEQILEEERSGKTNDALKEKVAANFNTAKADAVLGKADVAKEDVAANNNITKETNVLVLCAGGGTSGLLANALNKAAAEYNVPVKAAAGGYGAHREMLPEFDLVILAPQVASNFDDMKAETDKLGIKLVKTEGAQYIKLTRDGQGALAFVQQQFD.

Positions 7–409 (LIEKGKPFFE…VVDTIIYYPF (403 aa)) constitute a PTS EIIC type-3 domain. The next 9 membrane-spanning stretches (helical) occupy residues 30–50 (GFIAGMPVILFSSIFILIAYV), 62–82 (IETFLMTPYSYSMGILAFFVG), 103–123 (INFLSTMLASMVGFLLMAAEP), 128–148 (GFLTAFMGTKGLLTAFIAAFV), 183–203 (FTVSVVLLYGLELLVKGTLGV), 222–242 (GYLGITLIFGAYAFFWFVGIH), 283–303 (FIATMGGTGATLIVPFLFMWI), 339–359 (IFFVPFIFAPIVNVWIFKFFV), and 389–409 (VLSFILAGLLVVVDTIIYYPF). The 103-residue stretch at 466–568 (ETNVLVLCAG…ALAFVQQQFD (103 aa)) folds into the PTS EIIB type-3 domain. Cysteine 473 acts as the Phosphocysteine intermediate; for EIIB activity in catalysis. The residue at position 473 (cysteine 473) is a Phosphocysteine; by EIIA.

The protein resides in the cell membrane. The enzyme catalyses lactose(out) + N(pros)-phospho-L-histidyl-[protein] = lactose 6-phosphate(in) + L-histidyl-[protein]. In terms of biological role, the phosphoenolpyruvate-dependent sugar phosphotransferase system (sugar PTS), a major carbohydrate active transport system, catalyzes the phosphorylation of incoming sugar substrates concomitantly with their translocation across the cell membrane. The enzyme II LacEF PTS system is involved in lactose transport. This is PTS system lactose-specific EIICB component from Lactococcus lactis subsp. lactis (Streptococcus lactis).